A 124-amino-acid chain; its full sequence is uncharacterized protein (124 aa).

This is an uncharacterized protein from Lactobacillus acidophilus.